We begin with the raw amino-acid sequence, 184 residues long: Lactoylglutathione lyase (184 aa).

At Ala2 the chain carries N-acetylalanine. The cysteines at positions 19 and 20 are disulfide-linked. The VOC domain occupies 31–177 (LLQQTMLRVK…DGYWIEILNP (147 aa)). Substrate is bound by residues Gln34 and Arg38. Gln34 contacts Zn(2+). The cysteines at positions 61 and 139 are disulfide-linked. Lys88 carries the post-translational modification N6-succinyllysine. A Zn(2+)-binding site is contributed by Glu100. Asn104 serves as a coordination point for substrate. Thr107 carries the post-translational modification Phosphothreonine. Substrate contacts are provided by Arg123 and His127. His127 serves as a coordination point for Zn(2+). Cys139 bears the S-glutathionyl cysteine; alternate mark. Position 148 is an N6-acetyllysine; alternate (Lys148). Lys148 is subject to N6-succinyllysine; alternate. 157–158 (KM) is a substrate binding site. Glu173 serves as a coordination point for Zn(2+). The Proton donor/acceptor role is filled by Glu173.

The protein belongs to the glyoxalase I family. In terms of assembly, homodimer. It depends on Zn(2+) as a cofactor. Glutathionylation at Cys-139 inhibits enzyme activity. In terms of processing, phosphorylated at Thr-107 in the presence of CaMK2. However, this is a consensus site for phosphorylation by CK2 so phosphorylation may be mediated by CK2 rather than CaMK2. Phosphorylation is induced by TNF and suppresses the TNF-induced transcriptional activity of NF-kappa-B. Post-translationally, exists in a nitric oxide (NO)-modified form. The exact nature of the modification is unknown, but it suppresses the TNF-induced transcriptional activity of NF-kappa-B.

The catalysed reaction is (R)-S-lactoylglutathione = methylglyoxal + glutathione. It functions in the pathway secondary metabolite metabolism; methylglyoxal degradation; (R)-lactate from methylglyoxal: step 1/2. With respect to regulation, regulated by oxidation of Cys-139 in response to the redox state of the cell. Results in the alternative formation of cystine or glutathione-bound cysteine, the latter modification leading to reduced enzyme activity. Functionally, catalyzes the conversion of hemimercaptal, formed from methylglyoxal and glutathione, to S-lactoylglutathione. Involved in the regulation of TNF-induced transcriptional activity of NF-kappa-B. Required for normal osteoclastogenesis. This Homo sapiens (Human) protein is Lactoylglutathione lyase (GLO1).